A 479-amino-acid polypeptide reads, in one-letter code: Ribulose bisphosphate carboxylase large chain (479 aa).

Residues 1–2 constitute a propeptide that is removed on maturation; the sequence is MS. Residues asparagine 123 and threonine 173 each coordinate substrate. The active-site Proton acceptor is lysine 175. Residue lysine 177 coordinates substrate. Mg(2+) is bound by residues lysine 201, aspartate 203, and glutamate 204. The residue at position 201 (lysine 201) is an N6-carboxylysine. Serine 208 is modified (phosphoserine). The active-site Proton acceptor is the histidine 294. Residues arginine 295 and histidine 327 each contribute to the substrate site. Threonine 330 carries the phosphothreonine modification. Substrate is bound at residue serine 379.

It belongs to the RuBisCO large chain family. Type I subfamily. As to quaternary structure, heterohexadecamer of 8 large chains and 8 small chains; disulfide-linked. The disulfide link is formed within the large subunit homodimers. The cofactor is Mg(2+). In terms of processing, the disulfide bond which can form in the large chain dimeric partners within the hexadecamer appears to be associated with oxidative stress and protein turnover.

The protein localises to the plastid. It is found in the chloroplast. The enzyme catalyses 2 (2R)-3-phosphoglycerate + 2 H(+) = D-ribulose 1,5-bisphosphate + CO2 + H2O. The catalysed reaction is D-ribulose 1,5-bisphosphate + O2 = 2-phosphoglycolate + (2R)-3-phosphoglycerate + 2 H(+). RuBisCO catalyzes two reactions: the carboxylation of D-ribulose 1,5-bisphosphate, the primary event in carbon dioxide fixation, as well as the oxidative fragmentation of the pentose substrate in the photorespiration process. Both reactions occur simultaneously and in competition at the same active site. This Barbarea verna (Land cress) protein is Ribulose bisphosphate carboxylase large chain.